The primary structure comprises 304 residues: Lipoprotein signal peptidase (304 aa).

The next 3 helical transmembrane spans lie at 28–48 (IKIKYPILAVMGFFVLLIVFV), 86–106 (PAVPYLLQSLLTIIFLITFIF), and 112–132 (LIVLLPLITFGGLANVIDRSV). Residues Asp-148 and Asp-163 contribute to the active site. A helical membrane pass occupies residues 163 to 183 (DICIVTGFALIFLTFVVDIFL).

Belongs to the peptidase A8 family.

Its subcellular location is the cell membrane. The enzyme catalyses Release of signal peptides from bacterial membrane prolipoproteins. Hydrolyzes -Xaa-Yaa-Zaa-|-(S,diacylglyceryl)Cys-, in which Xaa is hydrophobic (preferably Leu), and Yaa (Ala or Ser) and Zaa (Gly or Ala) have small, neutral side chains.. It functions in the pathway protein modification; lipoprotein biosynthesis (signal peptide cleavage). This protein specifically catalyzes the removal of signal peptides from prolipoproteins. The protein is Lipoprotein signal peptidase of Mycoplasmoides gallisepticum (strain R(low / passage 15 / clone 2)) (Mycoplasma gallisepticum).